Here is a 402-residue protein sequence, read N- to C-terminus: Imidazolonepropionase (402 aa).

Fe(3+)-binding residues include His-66 and His-68. The Zn(2+) site is built by His-66 and His-68. 4-imidazolone-5-propanoate is bound by residues Arg-75, Tyr-138, and His-171. An N-formimidoyl-L-glutamate-binding site is contributed by Tyr-138. His-236 is a Fe(3+) binding site. His-236 is a binding site for Zn(2+). Gln-239 provides a ligand contact to 4-imidazolone-5-propanoate. A Fe(3+)-binding site is contributed by Asp-311. Asp-311 serves as a coordination point for Zn(2+). Asn-313 and Gly-315 together coordinate N-formimidoyl-L-glutamate. A 4-imidazolone-5-propanoate-binding site is contributed by Thr-316.

Belongs to the metallo-dependent hydrolases superfamily. HutI family. The cofactor is Zn(2+). It depends on Fe(3+) as a cofactor.

Its subcellular location is the cytoplasm. It carries out the reaction 4-imidazolone-5-propanoate + H2O = N-formimidoyl-L-glutamate. It functions in the pathway amino-acid degradation; L-histidine degradation into L-glutamate; N-formimidoyl-L-glutamate from L-histidine: step 3/3. Catalyzes the hydrolytic cleavage of the carbon-nitrogen bond in imidazolone-5-propanoate to yield N-formimidoyl-L-glutamate. It is the third step in the universal histidine degradation pathway. This Vibrio cholerae serotype O1 (strain ATCC 39541 / Classical Ogawa 395 / O395) protein is Imidazolonepropionase.